Reading from the N-terminus, the 156-residue chain is Small ribosomal subunit protein uS7 (156 aa).

This sequence belongs to the universal ribosomal protein uS7 family. As to quaternary structure, part of the 30S ribosomal subunit. Contacts proteins S9 and S11.

One of the primary rRNA binding proteins, it binds directly to 16S rRNA where it nucleates assembly of the head domain of the 30S subunit. Is located at the subunit interface close to the decoding center, probably blocks exit of the E-site tRNA. The sequence is that of Small ribosomal subunit protein uS7 from Buchnera aphidicola subsp. Cinara cedri (strain Cc).